The sequence spans 316 residues: Cytochrome c biogenesis protein CcsA (316 aa).

8 helical membrane passes run Ile9–Leu29, Phe39–Gln61, Leu70–Val90, Ile94–Leu114, Leu143–Phe163, Thr224–Asn244, Glu257–Leu271, and Ser289–Leu309.

The protein belongs to the CcmF/CycK/Ccl1/NrfE/CcsA family. May interact with Ccs1.

The protein localises to the plastid. It localises to the chloroplast thylakoid membrane. Its function is as follows. Required during biogenesis of c-type cytochromes (cytochrome c6 and cytochrome f) at the step of heme attachment. The protein is Cytochrome c biogenesis protein CcsA of Adiantum capillus-veneris (Maidenhair fern).